We begin with the raw amino-acid sequence, 578 residues long: Zinc finger-containing ubiquitin peptidase 1 (578 aa).

The C2H2-type 1 zinc finger occupies L2 to H24. A C2H2-type 2; atypical zinc finger spans residues I29–H52. C2H2-type zinc fingers lie at residues P154–H177 and Y193–H215. The tract at residues D226–R248 is MIU. Positions R249–G274 are zUBD/ZHA. At K262 the chain carries N6-acetyllysine. C360 functions as the Nucleophile in the catalytic mechanism. The Proton acceptor role is filled by H491. The active site involves D512.

Belongs to the peptidase C78 family. ZUFSP subfamily. In terms of assembly, interacts with RPA1 and RPA2.

It localises to the cytoplasm. The protein localises to the nucleus. The catalysed reaction is Thiol-dependent hydrolysis of ester, thioester, amide, peptide and isopeptide bonds formed by the C-terminal Gly of ubiquitin (a 76-residue protein attached to proteins as an intracellular targeting signal).. Deubiquitinase with endodeubiquitinase activity that specifically interacts with and cleaves 'Lys-63'-linked long polyubiquitin chains. Shows only weak activity against 'Lys-11' and 'Lys-48'-linked chains. Plays an important role in genome stability pathways, functioning to prevent spontaneous DNA damage and also promote cellular survival in response to exogenous DNA damage. Modulates the ubiquitination status of replication protein A (RPA) complex proteins in response to replication stress. This chain is Zinc finger-containing ubiquitin peptidase 1, found in Homo sapiens (Human).